A 776-amino-acid chain; its full sequence is K(+) efflux antiporter 3, chloroplastic (776 aa).

Residues 1-72 (MAISTMLGSI…KVFLDTSKRF (72 aa)) constitute a chloroplast transit peptide. The Lumenal, thylakoid portion of the chain corresponds to 73–93 (YFQGRWSESSGRRVETYAGVD). A helical transmembrane segment spans residues 94-114 (VASAVDVINDLGFDTLTFLMV). Position 115 (Thr-115) is a topological domain, stromal. The helical transmembrane segment at 116-136 (VIIVPAFRILKASPILGFFFA) threads the bilayer. Over 137 to 153 (GVVLNQFGLIRNLTDVK) the chain is Lumenal, thylakoid. The helical transmembrane segment at 154 to 174 (VLSEWGILFLLFEMGLELSLA) threads the bilayer. Residues 175–181 (RLKALAK) lie on the Stromal side of the membrane. A helical membrane pass occupies residues 182 to 202 (FAFGMGLTQVLLCTAAFTAFE). Residues 203 to 232 (LPPNGAIGTKILEFLFHSRPDLVNIRSIDE) are Lumenal, thylakoid-facing. Residues 233-253 (AVVIGAALSLSSSAFVLQLLA) form a helical membrane-spanning segment. The Stromal segment spans residues 254–266 (EKGELPTRFGSAT). Residues 267–287 (LGILLLQDIAVVPLLVILPVL) form a helical membrane-spanning segment. Residues 288 to 296 (ESQDIGGES) are Lumenal, thylakoid-facing. Residues 297-317 (IWPMLAKESAKALGGLGILSL) traverse the membrane as a helical segment. At 318–338 (GGKFFLRRIFEVVAETRSSEA) the chain is on the stromal side. Residues 339–359 (FVALCLLTVAGTSLVTQWLGF) traverse the membrane as a helical segment. Residues 360-389 (SDTLGAFLAGALLAETNFRTQIEADIRPFR) lie on the Lumenal, thylakoid side of the membrane. The chain crosses the membrane as a helical span at residues 390–410 (GLLLGLFFVTTGTSIDMEVLF). Residues 411 to 415 (REWPN) lie on the Stromal side of the membrane. The chain crosses the membrane as a helical span at residues 416–436 (VLSLLGGLIVIKTLIITAIGP). At 437-445 (RVGLTIQES) the chain is on the lumenal, thylakoid side. A helical membrane pass occupies residues 446-466 (VRVGFLLSQGGEFAFVVFSLA). Residues 467-468 (NR) are Stromal-facing. A helical membrane pass occupies residues 469 to 489 (LGVLPNELNKLLIIVVVLSMA). At 490–526 (LTPYLNQLGRKAADFLDERLDPGEKIGEDVNFDVSES) the chain is on the lumenal, thylakoid side. An RCK N-terminal domain is found at 524-649 (SESIVIIGFG…KKAGATDAIL (126 aa)). A helical transmembrane segment spans residues 527 to 547 (IVIIGFGQMGQVLANFLSTPL). The Stromal portion of the chain corresponds to 548–776 (VSDSDLVGWP…FVGKADKAQD (229 aa)). The disordered stretch occupies residues 728–776 (MQMKASDSNSDSAAEILQETAGLSQPPEIDDSSVNIDNGFVGKADKAQD).

This sequence belongs to the monovalent cation:proton antiporter 2 (CPA2) transporter (TC 2.A.37) family. KEA (TC 2.A.37.1) subfamily. Expressed at low levels in flowers, siliques and leaves. In terms of tissue distribution, expressed at low levels in flowers and leaves. As to expression, most abundant splice form in all organs, including siliques, flowers, leaves and roots. Preferentially expressed in photosynthetically active tissues, including seedling cotyledons and mature leaves. Expressed in shoots and roots.

The protein resides in the plastid. It is found in the chloroplast membrane. Its subcellular location is the golgi apparatus membrane. The protein localises to the chloroplast thylakoid membrane. It catalyses the reaction K(+)(in) + H(+)(out) = K(+)(out) + H(+)(in). Regulated by a mechanism involving lumenal C-terminus region; a fine-tuned balance between photoprotective energy dissipation in high light and a maximum quantum yield in low light involves a reduced activity under high light. Its function is as follows. Electroneutral K(+)/H(+) efflux antiporter assuring proton efflux from the thylakoid lumen to the plastid stroma, thus increasing the membrane potential at the expense of the proton gradient (delta pH) component of the proton motive force (PMF). Promotes photosynthesis and growth in conditions where the chloroplast (cp)ATP synthase activity is low (e.g. cgl160 mutant background) by reducing the pH gradient across the thylakoid membrane. Accelerates photosynthetic acclimation in fluctuating light environments by modulating two components of the proton motive force, the proton gradient and the electric potential (delta Psi). Promotes the relaxation of photoprotective energy-dependent non-photochemical quenching (NPQ) after transitions from high to low light, thus enhancing photosystem II (PSII) quantum efficiency in fluctuating light. On transition from high to low light, slows down photoprotection by dissipating the pH gradient across the thylakoid membrane. During photosynthetic response on transition from dark to low light, involved in a sequential mechanism of adaptation; VCCN1 and CLCe first trigger the activation of photoprotection, which is later down-regulated by KEA3 to a low steady state, while adjusting electron transport. Together with the chloroplast NADH dehydrogenase-like (NDH) complex, maximizes photosynthesis efficiency after a long dark adaptation. Required in roots for rapid hyperosmotic-induced Ca(2+) responses and for osmo-sensory potentiation in hyperosmotic conditions. Functionally, low K(+)/H(+) efflux antiporter activity. Low K(+)/H(+) efflux antiporter activity. Promotes non-photochemical quenching (NPQ) in high light conditions. This chain is K(+) efflux antiporter 3, chloroplastic, found in Arabidopsis thaliana (Mouse-ear cress).